The primary structure comprises 388 residues: DNA ADP-ribosyl transferase-DNA ADP-ribosyl glycohydrolase fusion protein (388 aa).

One can recognise a DarT domain in the interval 6-197 (RELYYITHID…PVIPDPTFFF (192 aa)). NAD(+)-binding positions include 10–12 (YIT) and Arg-50. Residues 34 to 52 (QSINCKKVYDNSIVLKRKS) form an NAD(+)-binding element region. Arg-50 functions as the Proton acceptor in the catalytic mechanism. Residues 107-152 (TDGNAASSETQIYRKSEIKNIKNIISVKDMEYWREEDGSKRKIMAE) form an ADP-ribosylating turn-turn loop region. The active site involves Glu-152. The Macro domain maps to 196-376 (FFLPNREIKL…IYLPLEKRIP (181 aa)). ADP-D-ribose contacts are provided by residues 215-216 (DM), 227-229 (SVN), Thr-301, 339-343 (GCGLG), and 371-372 (LE).

This sequence in the N-terminal section; belongs to the DarT ADP-ribosyltransferase family. The protein in the C-terminal section; belongs to the DarG ADP-ribosyl glycohydrolase family.

It catalyses the reaction an N-(ADP-alpha-D-ribosyl)-thymidine in DNA + H2O = a thymidine in DNA + ADP-D-ribose. It carries out the reaction a thymidine in DNA + NAD(+) = an N-(ADP-alpha-D-ribosyl)-thymidine in DNA + nicotinamide + H(+). In terms of biological role, a fusion protein of the toxic and antitoxin components of a hybrid type II/IV toxin-antitoxin (TA) system. The N-terminal domain ADP-ribosylates ssDNA on a thymidine residue, while the C-terminal domain removes the modification, neutralizing the toxic effect. The sequence is that of DNA ADP-ribosyl transferase-DNA ADP-ribosyl glycohydrolase fusion protein from Thermosipho africanus (strain H17ap60334).